Consider the following 276-residue polypeptide: NH(3)-dependent NAD(+) synthetase (276 aa).

51-58 contributes to the ATP binding site; the sequence is GISGGVDS. Position 57 (aspartate 57) interacts with Mg(2+). Arginine 148 provides a ligand contact to deamido-NAD(+). Threonine 168 provides a ligand contact to ATP. A Mg(2+)-binding site is contributed by glutamate 173. The deamido-NAD(+) site is built by lysine 181 and aspartate 188. The ATP site is built by lysine 197 and threonine 219. 268–269 is a deamido-NAD(+) binding site; that stretch reads HK.

Belongs to the NAD synthetase family. As to quaternary structure, homodimer.

The enzyme catalyses deamido-NAD(+) + NH4(+) + ATP = AMP + diphosphate + NAD(+) + H(+). It functions in the pathway cofactor biosynthesis; NAD(+) biosynthesis; NAD(+) from deamido-NAD(+) (ammonia route): step 1/1. Catalyzes the ATP-dependent amidation of deamido-NAD to form NAD. Uses ammonia as a nitrogen source. The polypeptide is NH(3)-dependent NAD(+) synthetase (Streptomyces coelicolor (strain ATCC BAA-471 / A3(2) / M145)).